Here is a 391-residue protein sequence, read N- to C-terminus: Polyketide synthase 1 (391 aa).

The active site involves Cys-164.

It belongs to the thiolase-like superfamily. Chalcone/stilbene synthases family. Homodimer. In terms of tissue distribution, expressed in fruits.

It catalyses the reaction (E)-4-coumaroyl-CoA + 3 malonyl-CoA + 3 H(+) = 2',4,4',6'-tetrahydroxychalcone + 3 CO2 + 4 CoA. It functions in the pathway secondary metabolite biosynthesis; flavonoid biosynthesis. Polyketide synthase producing naringenin chalcone and slightly p-coumaryltriacetic acid lactone (CTAL). Can use p-coumaryl-CoA as substrate. The protein is Polyketide synthase 1 (PKS1) of Rubus idaeus (Raspberry).